Here is a 426-residue protein sequence, read N- to C-terminus: Histidine--tRNA ligase (426 aa).

Belongs to the class-II aminoacyl-tRNA synthetase family.

Its subcellular location is the cytoplasm. It catalyses the reaction tRNA(His) + L-histidine + ATP = L-histidyl-tRNA(His) + AMP + diphosphate + H(+). This is Histidine--tRNA ligase from Sulfurisphaera tokodaii (strain DSM 16993 / JCM 10545 / NBRC 100140 / 7) (Sulfolobus tokodaii).